We begin with the raw amino-acid sequence, 425 residues long: Glyco-Gag protein (425 aa).

At Met-1–Arg-54 the chain is on the cytoplasmic side. The helical transmembrane segment at Leu-55–Glu-75 threads the bilayer. Residues Thr-76–Ala-425 are Extracellular-facing. Asn-137 carries N-linked (GlcNAc...) asparagine; by host glycosylation. The tract at residues Val-174–Gln-285 is disordered. The span at Phe-177 to Ser-196 shows a compositional bias: pro residues. The segment covering Ala-197–Lys-209 has biased composition (low complexity). Pro residues-rich tracts occupy residues Pro-213–Ser-223 and Glu-233–Pro-248.

Post-translationally, glycosylated by host. Cleaved by host near the middle of the molecule, releasing the c-terminal half containing capsid and nucleoprotein domains op GAG.

It is found in the host cell membrane. Its function is as follows. Plays a role in viral particle release. Presumably acts by facilitating the fission of the virion bud at the cell surface. This is Glyco-Gag protein from Felidae (cat family).